The following is a 126-amino-acid chain: Fluoride-specific ion channel FluC (126 aa).

4 helical membrane passes run 5–25 (VLAVSVGAVIGANLRWGLGLW), 35–55 (WGTLVANLSGGWLIGVLMAFF), 68–88 (FAVTGLCGALTTFSTFSLEMF), and 99–119 (ALVGILAHVVGSILMTALGFL). The Na(+) site is built by glycine 75 and threonine 78.

The protein belongs to the fluoride channel Fluc/FEX (TC 1.A.43) family.

The protein localises to the cell inner membrane. It catalyses the reaction fluoride(in) = fluoride(out). With respect to regulation, na(+) is not transported, but it plays an essential structural role and its presence is essential for fluoride channel function. Fluoride-specific ion channel. Important for reducing fluoride concentration in the cell, thus reducing its toxicity. In Marinobacter nauticus (strain ATCC 700491 / DSM 11845 / VT8) (Marinobacter aquaeolei), this protein is Fluoride-specific ion channel FluC.